Reading from the N-terminus, the 306-residue chain is Porphobilinogen deaminase (306 aa).

The residue at position 241 (C241) is an S-(dipyrrolylmethanemethyl)cysteine.

The protein belongs to the HMBS family. Monomer. Dipyrromethane is required as a cofactor.

It carries out the reaction 4 porphobilinogen + H2O = hydroxymethylbilane + 4 NH4(+). Its pathway is porphyrin-containing compound metabolism; protoporphyrin-IX biosynthesis; coproporphyrinogen-III from 5-aminolevulinate: step 2/4. In terms of biological role, tetrapolymerization of the monopyrrole PBG into the hydroxymethylbilane pre-uroporphyrinogen in several discrete steps. The polypeptide is Porphobilinogen deaminase (Acidithiobacillus ferrooxidans (strain ATCC 23270 / DSM 14882 / CIP 104768 / NCIMB 8455) (Ferrobacillus ferrooxidans (strain ATCC 23270))).